We begin with the raw amino-acid sequence, 1223 residues long: Rho family-interacting cell polarization regulator 1 (1223 aa).

Phosphoserine is present on Ser-22. Residues 83-112 adopt a coiled-coil conformation; sequence RGLTAYLEVHQQEQEKLQRQIKESKRNSRL. Ser-345 and Ser-347 each carry phosphoserine. Residue Thr-351 is modified to Phosphothreonine. Residues 371–411 form a disordered region; that stretch reads NGTAWSLSSESSDDSSSPQLSGTARHSTPKPLVQQPEPLPV. Composition is skewed to low complexity over residues 376–391 and 399–411; these read SLSSESSDDSSSPQLS and PKPLVQQPEPLPV. A phosphoserine mark is found at Ser-451, Ser-454, and Ser-468. 2 stretches are compositionally biased toward low complexity: residues 566-586 and 595-655; these read TTIGSAHTTTPSPLTSTGSVP and TPSP…TSPT. 2 disordered regions span residues 566 to 771 and 856 to 887; these read TTIG…QHSE and FLNDDEDEDNDGPGDRHTSSPEVVAEDRLDSS. Over residues 656–665 the composition is skewed to polar residues; it reads QEAKMSTHTT. The segment covering 673 to 688 has biased composition (low complexity); that stretch reads TTTSPISTTESPSPST. Polar residues-rich tracts occupy residues 693-703 and 725-741; these read ISSSSAESTGP and ASCTSYQSLASSGSKPL. Ser-748 carries the post-translational modification Phosphoserine. Residues 748–767 show a composition bias toward low complexity; it reads SPEQIPKSPSSSPSSSAPEP. The span at 858 to 867 shows a compositional bias: acidic residues; it reads NDDEDEDNDG. A compositionally biased stretch (basic and acidic residues) spans 868 to 885; sequence PGDRHTSSPEVVAEDRLD. 2 positions are modified to phosphoserine: Ser-874 and Ser-875.

This sequence belongs to the RIPOR family. As to quaternary structure, interacts (via N-terminus) with RHOA (GTP-bound form); this interaction links active RHOA to STK24 and STK26 kinases. Interacts with RHOB. Interacts with RHOC. Interacts (via C-terminus) with PDCD10; this interaction occurs in a Rho-independent manner. Interacts (via C-terminus) with STK24; this interaction occurs in a PDCD10-dependent and Rho-independent manner. Interacts (via C-terminus) with STK26; this interaction occurs in a PDCD10-dependent and Rho-independent manner. Interacts (via N-terminus) with 14-3-3 proteins; these interactions occur in a Rho-dependent manner. Expressed in the kidney exclusively by glomerular podocytes.

It is found in the cytoplasm. Its subcellular location is the golgi apparatus. In terms of biological role, downstream effector protein for Rho-type small GTPases that plays a role in cell polarity and directional migration. Acts as an adapter protein, linking active Rho proteins to STK24 and STK26 kinases, and hence positively regulates Golgi reorientation in polarized cell migration upon Rho activation. Involved in the subcellular relocation of STK26 from the Golgi to cytoplasm punctae in a Rho- and PDCD10-dependent manner upon serum stimulation. The polypeptide is Rho family-interacting cell polarization regulator 1 (Mus musculus (Mouse)).